Reading from the N-terminus, the 360-residue chain is Probable nuclear hormone receptor HR38 (360 aa).

The segment at 1–21 is disordered; sequence GSSSPGVAPADNTGPRAAPSS. The nuclear receptor DNA-binding region spans 23–98; it reads SQLCAVCGDT…VGMVKEVVRT (76 aa). NR C4-type zinc fingers lie at residues 26-46 and 62-86; these read CAVC…CEGC and CLAE…FQKC. Positions 122 to 357 constitute an NR LBD domain; the sequence is PPISLITALV…PLIENMFRAS (236 aa).

This sequence belongs to the nuclear hormone receptor family. NR4 subfamily. As to quaternary structure, forms a heterodimer with USP.

It localises to the nucleus. The polypeptide is Probable nuclear hormone receptor HR38 (HR38) (Bombyx mori (Silk moth)).